A 909-amino-acid chain; its full sequence is Alanine--tRNA ligase (909 aa).

Residues His-600, His-604, Cys-704, and His-708 each coordinate Zn(2+).

This sequence belongs to the class-II aminoacyl-tRNA synthetase family. Zn(2+) is required as a cofactor.

The protein localises to the cytoplasm. It carries out the reaction tRNA(Ala) + L-alanine + ATP = L-alanyl-tRNA(Ala) + AMP + diphosphate. Its function is as follows. Catalyzes the attachment of alanine to tRNA(Ala) in a two-step reaction: alanine is first activated by ATP to form Ala-AMP and then transferred to the acceptor end of tRNA(Ala). Also edits incorrectly charged Ser-tRNA(Ala) and Gly-tRNA(Ala) via its editing domain. The sequence is that of Alanine--tRNA ligase from Staphylothermus marinus (strain ATCC 43588 / DSM 3639 / JCM 9404 / F1).